The chain runs to 134 residues: MNIIEQLEREEVARLAKTIPDFEPGDTVIVNVRVKEGERTRVQAYEGVCIARNGGGLNESFTVRKISYGEGVERVFPVHSPMIDSIKVVRRGKVRRAKLYYLRDRRGKSARIVERSDRSDKAKAQKAAAATAAE.

The disordered stretch occupies residues 108 to 134; sequence KSARIVERSDRSDKAKAQKAAAATAAE. The segment covering 111–123 has biased composition (basic and acidic residues); the sequence is RIVERSDRSDKAK. Positions 125 to 134 are enriched in low complexity; the sequence is QKAAAATAAE.

The protein belongs to the bacterial ribosomal protein bL19 family.

In terms of biological role, this protein is located at the 30S-50S ribosomal subunit interface and may play a role in the structure and function of the aminoacyl-tRNA binding site. In Methylorubrum extorquens (strain PA1) (Methylobacterium extorquens), this protein is Large ribosomal subunit protein bL19.